The sequence spans 366 residues: NADP-dependent oxidoreductase domain-containing protein 1 (366 aa).

This sequence belongs to the pyrroline-5-carboxylate reductase family.

Probable oxidoreductase. This is NADP-dependent oxidoreductase domain-containing protein 1 (Noxred1) from Mus musculus (Mouse).